The sequence spans 773 residues: Subtilisin-like protease SBT3.4 (773 aa).

The first 23 residues, 1–23 (MRNFRSSVLVVLSLIIVLNVARA), serve as a signal peptide directing secretion. The propeptide at 24–108 (SAKSKVHIVY…VIPDSYYELA (85 aa)) is activation peptide. The Inhibitor I9 domain occupies 29 to 108 (VHIVYLGEKQ…VIPDSYYELA (80 aa)). The 509-residue stretch at 112-620 (IWDYLGPSAD…GGLVNPEKAA (509 aa)) folds into the Peptidase S8 domain. Asp-142 acts as the Charge relay system in catalysis. The N-linked (GlcNAc...) asparagine glycan is linked to Asn-200. His-216 functions as the Charge relay system in the catalytic mechanism. N-linked (GlcNAc...) asparagine glycosylation is found at Asn-231, Asn-408, and Asn-536. Residues 382-474 (SLVYPEDPGN…IDNELGTDIL (93 aa)) form the PA domain. Residue Ser-551 is the Charge relay system of the active site. The N-linked (GlcNAc...) asparagine glycan is linked to Asn-643.

Belongs to the peptidase S8 family.

It is found in the secreted. The polypeptide is Subtilisin-like protease SBT3.4 (Arabidopsis thaliana (Mouse-ear cress)).